A 314-amino-acid polypeptide reads, in one-letter code: Ribonuclease Z (314 aa).

Positions 61, 63, 65, 66, 139, 211, and 269 each coordinate Zn(2+). Asp65 functions as the Proton acceptor in the catalytic mechanism.

Belongs to the RNase Z family. Homodimer. The cofactor is Zn(2+).

It catalyses the reaction Endonucleolytic cleavage of RNA, removing extra 3' nucleotides from tRNA precursor, generating 3' termini of tRNAs. A 3'-hydroxy group is left at the tRNA terminus and a 5'-phosphoryl group is left at the trailer molecule.. Zinc phosphodiesterase, which displays some tRNA 3'-processing endonuclease activity. Probably involved in tRNA maturation, by removing a 3'-trailer from precursor tRNA. The polypeptide is Ribonuclease Z (Gemmatimonas aurantiaca (strain DSM 14586 / JCM 11422 / NBRC 100505 / T-27)).